The sequence spans 561 residues: Probable galacturonosyltransferase 9 (561 aa).

The Cytoplasmic portion of the chain corresponds to 1 to 27 (MAVAFRGGRGGVGSGQSTGLRSFFSYR). A helical; Signal-anchor for type II membrane protein transmembrane segment spans residues 28 to 48 (IFISALFSFLFLATFSVVLNS). The Lumenal segment spans residues 49–561 (SRHQPHQDHT…EFVQMCNFGL (513 aa)). N124, N320, N346, and N426 each carry an N-linked (GlcNAc...) asparagine glycan.

This sequence belongs to the glycosyltransferase 8 family. In terms of tissue distribution, expressed in roots, inflorescences, siliques, leaves and stems.

The protein localises to the golgi apparatus membrane. It functions in the pathway glycan metabolism; pectin biosynthesis. May be involved in pectin synthesis. The sequence is that of Probable galacturonosyltransferase 9 (GAUT9) from Arabidopsis thaliana (Mouse-ear cress).